Here is a 202-residue protein sequence, read N- to C-terminus: MSNLSARTGRDHQRYDNNFRLVSGCIPYRLVKDEEEDSTSVDFENKLQVLMISSPNRHDLVFPKGGWEDDETVLEAASREAMEEAGVKGILREDPLGVWEFRSKSSSVEADCCLGGGCKGYMFALEVKEELAIWPEQDDRERRWLNVKEALELCRYEWMQSALEEFLRVMAEEGSTKEDSLAISSISNRGERQIDPRYCFVV.

Residues 18-167 enclose the Nudix hydrolase domain; it reads NFRLVSGCIP…WMQSALEEFL (150 aa). Positions 65-86 match the Nudix box motif; the sequence is GGWEDDETVLEAASREAMEEAG. Mg(2+) contacts are provided by Glu-80 and Glu-84.

It belongs to the Nudix hydrolase family. As to quaternary structure, monomer. Requires Mg(2+) as cofactor. Expressed in roots, leaves, stems and inflorescences.

The protein localises to the mitochondrion. With respect to regulation, inhibited by fluoride. Its function is as follows. Mediates the hydrolysis of some nucleoside diphosphate derivatives. Can use diadenosine 5',5'''-P(1)P(6) hexaphosphate (Ap(6)A), diadenosine 5',5'''-P(1)P(5) pentaphosphate (Ap(5)A) and adenosine tetraphosphate (p(4)A) as substrates, but not diadenosine 5',5'''-P(1)P(4) tetraphosphate (Ap(4)A), diadenosine 5',5'''-P(1)P(3) triphosphate (Ap(3)A), deoxyribonucleoside triphosphates, ribonucleoside triphosphates, diphosphoinositol pentakisphosphate (PP-InsP(5)) and 5-phospho-alpha-D-ribosyl diphosphate (PRPP). The chain is Nudix hydrolase 13, mitochondrial (NUDT13) from Arabidopsis thaliana (Mouse-ear cress).